The chain runs to 216 residues: MASTWFFLLALLAVSISNAFASDPSQLQDFCVADKMSQVLVNGFACKDPAAITVEDFFFSGLHMAGNTSNRQGSAVTGVNVAQISGLNTLGISLARVDYAPYGLNPPHIHPRATEILTILEGSLYVGFVTSNPENKLFTKVLNKGDVFVFPQGLIHFQFNYGTKDVIALAALSSQNPGVITIANAVFGSKPFISDDILAKAFQVEKKIVDRIQAQF.

The first 21 residues, 1 to 21, serve as a signal peptide directing secretion; the sequence is MASTWFFLLALLAVSISNAFA. Cys31 and Cys46 are oxidised to a cystine. Residues 60-210 form the Cupin type-1 domain; sequence SGLHMAGNTS…AFQVEKKIVD (151 aa). N-linked (GlcNAc...) asparagine glycosylation is present at Asn67. Residues His108, His110, Glu115, and His156 each coordinate Mn(2+).

Belongs to the germin family. Oligomer (believed to be a pentamer but probably hexamer).

The protein localises to the secreted. It localises to the extracellular space. It is found in the apoplast. May play a role in plant defense. Probably has no oxalate oxidase activity even if the active site is conserved. This is Putative germin-like protein 2-1 from Oryza sativa subsp. japonica (Rice).